The following is an 88-amino-acid chain: Small ribosomal subunit protein uS15 (88 aa).

It belongs to the universal ribosomal protein uS15 family. Part of the 30S ribosomal subunit. Forms a bridge to the 50S subunit in the 70S ribosome, contacting the 23S rRNA.

Its function is as follows. One of the primary rRNA binding proteins, it binds directly to 16S rRNA where it helps nucleate assembly of the platform of the 30S subunit by binding and bridging several RNA helices of the 16S rRNA. Forms an intersubunit bridge (bridge B4) with the 23S rRNA of the 50S subunit in the ribosome. The polypeptide is Small ribosomal subunit protein uS15 (Francisella tularensis subsp. novicida (strain U112)).